We begin with the raw amino-acid sequence, 236 residues long: MDAVAVVYGITAAGFAVGVAIVGYLYASLEGSEERSILAALALIPGFAGISYVAMAFGIGTVTIGETTLVGFRYLDWVVTTPLLVGFVGYAAGASRRAIFGVMVADALMILTGVGAVVADGTLKWVLFGVSTVFHVSLFAYLYLVFPRSVPDDPQRIGLFSLLKNHIGLLWIAYPLVWLAGPEGLGLATYVGVSITYAFLDLLAKVPYVYFFYARRQVFATKLLRDSGEVTATPAD.

The Extracellular portion of the chain corresponds to 1-3 (MDA). A helical membrane pass occupies residues 4–25 (VAVVYGITAAGFAVGVAIVGYL). Over 26-34 (YASLEGSEE) the chain is Cytoplasmic. Residues 35-56 (RSILAALALIPGFAGISYVAMA) traverse the membrane as a helical segment. Residues 57-70 (FGIGTVTIGETTLV) are Extracellular-facing. A helical membrane pass occupies residues 71 to 92 (GFRYLDWVVTTPLLVGFVGYAA). The Cytoplasmic portion of the chain corresponds to 93–95 (GAS). A helical transmembrane segment spans residues 96–118 (RRAIFGVMVADALMILTGVGAVV). Residues 119-122 (ADGT) are Extracellular-facing. A helical transmembrane segment spans residues 123–150 (LKWVLFGVSTVFHVSLFAYLYLVFPRSV). The Cytoplasmic portion of the chain corresponds to 151-153 (PDD). Residues 154 to 181 (PQRIGLFSLLKNHIGLLWIAYPLVWLAG) traverse the membrane as a helical segment. The Extracellular segment spans residues 182–189 (PEGLGLAT). A helical transmembrane segment spans residues 190-222 (YVGVSITYAFLDLLAKVPYVYFFYARRQVFATK). Lys-205 bears the N6-(retinylidene)lysine mark. At 223-236 (LLRDSGEVTATPAD) the chain is on the cytoplasmic side.

Belongs to the archaeal/bacterial/fungal opsin family.

The protein localises to the cell membrane. The chain is Bacterial rhodopsin CSR3 from Haloarcula vallismortis (Halobacterium vallismortis).